A 330-amino-acid polypeptide reads, in one-letter code: Polyprenyl transferase dpfgC (330 aa).

Asparagine 34 carries N-linked (GlcNAc...) asparagine glycosylation. 7 helical membrane passes run 105 to 125, 146 to 166, 175 to 192, 199 to 219, 237 to 257, 273 to 293, and 310 to 330; these read ALCV…NDWI, VTTT…WGVL, VLKH…YPFG, KLMI…AIPG, CLPL…AYSY, NIAG…IILA, and NFIL…LTSA.

It belongs to the UbiA prenyltransferase family. It depends on Mg(2+) as a cofactor.

Its subcellular location is the membrane. It participates in secondary metabolite biosynthesis; terpenoid biosynthesis. Polyprenyl transferase; part of the gene cluster that mediates the biosynthesis of diterpenoid pyrones. The first step of the pathway is the synthesis of the alpha-pyrone moiety by the polyketide synthase dpfgA via condensation of one acetyl-CoA starter unit with 3 malonyl-CoA units and 2 methylations. The alpha-pyrone is then combined with geranylgeranyl pyrophosphate (GGPP) formed by the GGPP synthase dpfgD through the action of the prenyltransferase dpfgC to yield a linear alpha-pyrone diterpenoid. Subsequent steps in the diterpenoid pyrone biosynthetic pathway involve the decalin core formation, which is initiated by the epoxidation of the C10-C11 olefin by the FAD-dependent oxidoreductase dpfgE, and is followed by a cyclization cascade catalyzed by the terpene cyclase dpfgB. The short chain dehydrogenase/reductase dpfgG then oxidizes the 8S hydroxy group to a ketone and the short chain dehydrogenase/reductase dpfgH reduces the ketone to the 8R hydroxy group to yield higginsianin B. Higginsianin B is further methylated by the methyltransferase dpfgI to produce the intermediate named FDDP B. The cytochrome P450 monooxygenase dfgpJ then catalyzes a three-step oxidation at C-27 to generate a carboxylic acid as well as C-26 hydroxylation. Finally, methyltransferase dpfgK methylates the carboxylic acid generated by dpfgJ, yielding the final diterpenoid pyrones from the pathway which were named FDDP D and FDDP E. This Gibberella zeae (strain ATCC MYA-4620 / CBS 123657 / FGSC 9075 / NRRL 31084 / PH-1) (Wheat head blight fungus) protein is Polyprenyl transferase dpfgC.